The chain runs to 283 residues: 4-diphosphocytidyl-2-C-methyl-D-erythritol kinase (283 aa).

Lys10 is a catalytic residue. Residue 95–105 (PVAAGLGGGSS) coordinates ATP. Asp137 is a catalytic residue.

The protein belongs to the GHMP kinase family. IspE subfamily.

It catalyses the reaction 4-CDP-2-C-methyl-D-erythritol + ATP = 4-CDP-2-C-methyl-D-erythritol 2-phosphate + ADP + H(+). Its pathway is isoprenoid biosynthesis; isopentenyl diphosphate biosynthesis via DXP pathway; isopentenyl diphosphate from 1-deoxy-D-xylulose 5-phosphate: step 3/6. Catalyzes the phosphorylation of the position 2 hydroxy group of 4-diphosphocytidyl-2C-methyl-D-erythritol. This is 4-diphosphocytidyl-2-C-methyl-D-erythritol kinase from Limosilactobacillus reuteri (strain DSM 20016) (Lactobacillus reuteri).